We begin with the raw amino-acid sequence, 431 residues long: Adenylosuccinate synthetase (431 aa).

GTP-binding positions include 13-19 (GDEGKGK) and 41-43 (GHT). The active-site Proton acceptor is the Asp14. The Mg(2+) site is built by Asp14 and Gly41. Residues 14 to 17 (DEGK), 39 to 42 (NAGH), Thr130, Arg144, Gln225, Thr240, and Arg304 contribute to the IMP site. The Proton donor role is filled by His42. Residue 300–306 (AVTGRPR) coordinates substrate. GTP-binding positions include Arg306, 332–334 (KLD), and 415–417 (STG).

It belongs to the adenylosuccinate synthetase family. Homodimer. It depends on Mg(2+) as a cofactor.

Its subcellular location is the cytoplasm. The catalysed reaction is IMP + L-aspartate + GTP = N(6)-(1,2-dicarboxyethyl)-AMP + GDP + phosphate + 2 H(+). The protein operates within purine metabolism; AMP biosynthesis via de novo pathway; AMP from IMP: step 1/2. Plays an important role in the de novo pathway of purine nucleotide biosynthesis. Catalyzes the first committed step in the biosynthesis of AMP from IMP. In Legionella pneumophila (strain Paris), this protein is Adenylosuccinate synthetase.